The following is a 395-amino-acid chain: Chalcone synthase (395 aa).

Residue Cys-164 is part of the active site.

Belongs to the thiolase-like superfamily. Chalcone/stilbene synthases family.

It catalyses the reaction (E)-4-coumaroyl-CoA + 3 malonyl-CoA + 3 H(+) = 2',4,4',6'-tetrahydroxychalcone + 3 CO2 + 4 CoA. It participates in secondary metabolite biosynthesis; flavonoid biosynthesis. In terms of biological role, the primary product of this enzyme is 4,2',4',6'-tetrahydroxychalcone (also termed naringenin-chalcone or chalcone) which can under specific conditions spontaneously isomerize into naringenin. This chain is Chalcone synthase (CHS), found in Betula pendula (European white birch).